A 492-amino-acid chain; its full sequence is uncharacterized protein (492 aa).

Helical transmembrane passes span 67 to 87, 88 to 108, 110 to 130, 157 to 177, 185 to 205, 232 to 252, 255 to 275, 294 to 314, 333 to 353, 367 to 387, 392 to 412, 434 to 454, and 464 to 484; these read VAIMSIYGSLVYMSTIIGGWL, ADRVFGTANTVFYGGIFIMFG, IALAYPGSSIAFYISMVLIIV, GFSIFYMGINLGGLLAPLIVG, YHLGFGAAAVGMLLGLIVFAL, IGVIIVAIAVIISVQTGVLTI, FIDLVSILGILIPVIYFIIMF, LFIGAVMFWAIQEQGATILAV, WFQSLNPLFVVIFAPIFAWLW, FSIGIILAGLSFIIMVFPAMQ, LVSPLWLVLSFLLVVLGELCL, SMWFLTNAAAQAINAQVAGLF, and GTIGLISIVLGGILLLLSPVI.

This sequence belongs to the major facilitator superfamily. Proton-dependent oligopeptide transporter (POT/PTR) (TC 2.A.17) family.

Its subcellular location is the cell membrane. This is an uncharacterized protein from Bacillus subtilis (strain 168).